Reading from the N-terminus, the 171-residue chain is MTAILITGYRSFEIGIFDHKDPRVSIIKQAIRKDLIGYLENGVDWFIFTGNLGFEQWALEVANELKEEYPLQIATIFLFETHGDRWNEKNQKVLSQFRAVDFVKYYFPNYEQPTQFSQYYQFLLEKTEGAYVFYDTENETNLKYFLKKAKDMPHYQLLLLTFDRLNDMSQS.

This sequence belongs to the UPF0398 family.

The chain is UPF0398 protein MGAS9429_Spy1349 from Streptococcus pyogenes serotype M12 (strain MGAS9429).